The primary structure comprises 465 residues: FAD-dependent monooxygenase pyr5 (465 aa).

Positions 1–16 are cleaved as a signal peptide; that stretch reads MRVLIIGGSIAGLTLA. FAD contacts are provided by glutamate 30, glycine 44, and arginine 103. Residue tyrosine 210 is part of the active site. Positions 306 and 319 each coordinate FAD. The chain crosses the membrane as a helical span at residues 440 to 456; the sequence is PTFPLTVAGLCLVAIVI.

It belongs to the paxM FAD-dependent monooxygenase family. FAD serves as cofactor.

It is found in the membrane. The catalysed reaction is 4-hydroxy-3-[(2E,6E)-farnesyl]-6-(pyridin-3-yl)-2H-pyran-2-one + NADPH + O2 + H(+) = 2-oxo-3-[(8S)-epoxy-(2E,6E)-farnesyl]-6-(pyridin-3-yl)-2H-pyran-4-olate + NADP(+) + H2O. Its pathway is secondary metabolite biosynthesis; terpenoid biosynthesis. FAD-dependent monooxygenase; part of the gene cluster that mediates the biosynthesis of pyripyropene A, a specific human acyl-coenzyme A:cholesterol acyltransferase 2 inhibitor. The first step of the pathway is the synthesis of nicotinyl-CoA from nicotinic acid by the nicotinic acid-CoA ligase pyr1. Nicotinyl-CoA is then a substrate of polyketide synthase pyr2 to produce 4-hydroxy-6-(3-pyridinyl)-2H-pyran-2-one (HPPO) which is further prenylated by the polyprenyl transferase pyr6 to yield farnesyl-HPPO. The next steps consist of an epoxidation of farnesyl-HPPO to epoxyfarnesyl-HPPO by FAD-dependent monooxygenase pyr5 and a cyclization of the terpenoid portion by the terpene cyclase pyr4 to yield deacetyl-pyripyropene E. The 2 cytochrome P450 monooxygenases pyr3 and pyr9, and the 2 acetyltransferases pyr7 and pyr8 are involved in the conversion of deacetyl-pyripyropene E into pyripyropene A through several cycles of oxidation and acetylation steps. Pyr7 acetylates deacetyl-pyripyropene E to pyripyropene E which is oxidized to 11-deacetyl-pyripyropene O by pyr3, which is in turn acetylated into pyripyropene O by pyr8. Pyripyropene O is then oxidized to deacetyl-pyripyropene A by pyr9. Deacetyl-pyripyropene A is finally acetylated to pyripyropene A by pyr8. This is FAD-dependent monooxygenase pyr5 from Aspergillus fumigatus (strain ATCC MYA-4609 / CBS 101355 / FGSC A1100 / Af293) (Neosartorya fumigata).